A 279-amino-acid chain; its full sequence is tRNA (guanine-N(1)-)-methyltransferase (279 aa).

Residues G117 and 141–146 (LGDYVL) each bind S-adenosyl-L-methionine. The segment at 256 to 279 (WTPDGSGFRAGGDPVADSSDTNEP) is disordered.

It belongs to the RNA methyltransferase TrmD family. As to quaternary structure, homodimer.

The protein resides in the cytoplasm. It carries out the reaction guanosine(37) in tRNA + S-adenosyl-L-methionine = N(1)-methylguanosine(37) in tRNA + S-adenosyl-L-homocysteine + H(+). Its function is as follows. Specifically methylates guanosine-37 in various tRNAs. The chain is tRNA (guanine-N(1)-)-methyltransferase from Kineococcus radiotolerans (strain ATCC BAA-149 / DSM 14245 / SRS30216).